The sequence spans 328 residues: Mannitol-1-phosphate 5-dehydrogenase (328 aa).

Residue Leu3 to Gly14 participates in NAD(+) binding.

This sequence belongs to the mannitol dehydrogenase family.

It carries out the reaction D-mannitol 1-phosphate + NAD(+) = beta-D-fructose 6-phosphate + NADH + H(+). The protein is Mannitol-1-phosphate 5-dehydrogenase (mtlD) of Mycoplasma mycoides subsp. mycoides SC (strain CCUG 32753 / NCTC 10114 / PG1).